The sequence spans 712 residues: Polyribonucleotide nucleotidyltransferase (712 aa).

Residues D493 and D499 each contribute to the Mg(2+) site. In terms of domain architecture, KH spans P560 to I619. An S1 motif domain is found at G629–L697.

It belongs to the polyribonucleotide nucleotidyltransferase family. It depends on Mg(2+) as a cofactor.

The protein localises to the cytoplasm. The catalysed reaction is RNA(n+1) + phosphate = RNA(n) + a ribonucleoside 5'-diphosphate. Functionally, involved in mRNA degradation. Catalyzes the phosphorolysis of single-stranded polyribonucleotides processively in the 3'- to 5'-direction. This chain is Polyribonucleotide nucleotidyltransferase, found in Synechococcus sp. (strain JA-2-3B'a(2-13)) (Cyanobacteria bacterium Yellowstone B-Prime).